We begin with the raw amino-acid sequence, 374 residues long: Histidine biosynthesis bifunctional protein HisB (374 aa).

The histidinol-phosphatase stretch occupies residues 1-183 (MKKKVLFIDR…RVAEFLFAGE (183 aa)). The active-site Nucleophile is aspartate 9. Mg(2+) contacts are provided by aspartate 9, aspartate 11, and aspartate 131. Aspartate 11 serves as the catalytic Proton donor. Residues 184–374 (RRAEIRRTTK…FELPSSKGVL (191 aa)) form an imidazoleglycerol-phosphate dehydratase region.

It in the N-terminal section; belongs to the histidinol-phosphatase family. This sequence in the C-terminal section; belongs to the imidazoleglycerol-phosphate dehydratase family. It depends on Mg(2+) as a cofactor.

It localises to the cytoplasm. It carries out the reaction D-erythro-1-(imidazol-4-yl)glycerol 3-phosphate = 3-(imidazol-4-yl)-2-oxopropyl phosphate + H2O. The enzyme catalyses L-histidinol phosphate + H2O = L-histidinol + phosphate. It functions in the pathway amino-acid biosynthesis; L-histidine biosynthesis; L-histidine from 5-phospho-alpha-D-ribose 1-diphosphate: step 6/9. Its pathway is amino-acid biosynthesis; L-histidine biosynthesis; L-histidine from 5-phospho-alpha-D-ribose 1-diphosphate: step 8/9. This chain is Histidine biosynthesis bifunctional protein HisB, found in Bacteroides fragilis (strain ATCC 25285 / DSM 2151 / CCUG 4856 / JCM 11019 / LMG 10263 / NCTC 9343 / Onslow / VPI 2553 / EN-2).